Here is a 349-residue protein sequence, read N- to C-terminus: Beta-glucanase (349 aa).

Positions 1–27 (MNIKKTAVKSALAVAAAAAALTTNVSA) are cleaved as a signal peptide. The GH16 domain maps to 28–197 (KDFSGAELYT…WVKVYKYTPG (170 aa)). Residue E79 is the Nucleophile of the active site. The active-site Proton donor is E83. A disordered region spans residues 258 to 311 (SFNGQVPRDDEPAPQSSSSAPASSSSVPASSSSVPASSSSAFVPPSSSSATNAI). Residues 270-307 (APQSSSSAPASSSSVPASSSSVPASSSSAFVPPSSSSA) are compositionally biased toward low complexity. 5 tandem repeats follow at residues 271 to 277 (PQSSSSA), 278 to 284 (PASSSSV), 285 to 291 (PASSSSV), 292 to 298 (PASSSSA), and 301 to 307 (PPSSSSA). The tract at residues 271–307 (PQSSSSAPASSSSVPASSSSVPASSSSAFVPPSSSSA) is 5 X 7 AA tandem repeats of P-X-S-S-S-S-X.

It belongs to the glycosyl hydrolase 16 family.

The enzyme catalyses Hydrolysis of (1-&gt;4)-beta-D-glucosidic linkages in beta-D-glucans containing (1-&gt;3)- and (1-&gt;4)-bonds.. The chain is Beta-glucanase from Fibrobacter succinogenes (strain ATCC 19169 / S85).